We begin with the raw amino-acid sequence, 302 residues long: NAD kinase 1 (302 aa).

Asp67 acts as the Proton acceptor in catalysis. Residues 67 to 68, Arg72, 148 to 149, Lys178, and Asp180 contribute to the NAD(+) site; these read DG and ND.

This sequence belongs to the NAD kinase family. Requires a divalent metal cation as cofactor.

The protein resides in the cytoplasm. The catalysed reaction is NAD(+) + ATP = ADP + NADP(+) + H(+). Its function is as follows. Involved in the regulation of the intracellular balance of NAD and NADP, and is a key enzyme in the biosynthesis of NADP. Catalyzes specifically the phosphorylation on 2'-hydroxyl of the adenosine moiety of NAD to yield NADP. The polypeptide is NAD kinase 1 (Prochlorococcus marinus (strain NATL2A)).